Consider the following 122-residue polypeptide: Large ribosomal subunit protein uL14 (122 aa).

Belongs to the universal ribosomal protein uL14 family. In terms of assembly, part of the 50S ribosomal subunit. Forms a cluster with proteins L3 and L19. In the 70S ribosome, L14 and L19 interact and together make contacts with the 16S rRNA in bridges B5 and B8.

Functionally, binds to 23S rRNA. Forms part of two intersubunit bridges in the 70S ribosome. This chain is Large ribosomal subunit protein uL14, found in Lachnospira eligens (strain ATCC 27750 / DSM 3376 / VPI C15-48 / C15-B4) (Eubacterium eligens).